The sequence spans 2647 residues: Filamin-A (2647 aa).

The interval M1–E37 is disordered. N-acetylserine is present on S2. The interval S2–P274 is actin-binding. Phosphoserine is present on residues S11, S16, and S20. The span at D22–E37 shows a compositional bias: basic and acidic residues. Residues K42, K43, and K135 each participate in a glycyl lysine isopeptide (Lys-Gly) (interchain with G-Cter in ubiquitin) cross-link. 2 consecutive Calponin-homology (CH) domains span residues K43–S149 and Q166–L269. Residues P271–T294 form a disordered region. Filamin repeat units lie at residues R276 to V374, K376 to V474, G475 to V570, G571 to I663, P667 to V763, G764 to V866, E867 to V965, S966 to A1061, V1062 to V1154, A1155 to V1249, E1250 to V1349, T1350 to V1442, H1443 to V1539, L1540 to A1636, and D1641 to A1740. Residue K299 forms a Glycyl lysine isopeptide (Lys-Gly) (interchain with G-Cter in SUMO1); alternate linkage. Residue K299 forms a Glycyl lysine isopeptide (Lys-Gly) (interchain with G-Cter in SUMO2); alternate linkage. K376 and K508 each carry N6-acetyllysine. Residues K700, K781, K837, K865, and K906 each carry the N6-acetyllysine modification. Phosphoserine occurs at positions 968 and 1055. K1071 carries the N6-acetyllysine; alternate modification. N6-succinyllysine; alternate is present on K1071. A Phosphoserine modification is found at S1084. The residue at position 1089 (T1089) is a Phosphothreonine. Phosphoserine is present on residues S1301 and S1338. At K1372 the chain carries N6-acetyllysine. A phosphoserine mark is found at S1459 and S1533. Residues P1490–A1607 form an interaction with furin region. An N6-acetyllysine modification is found at K1538. A phosphoserine mark is found at S1630 and S1734. Positions L1741–V1778 are hinge 1. T1750 bears the Phosphothreonine mark. Filamin repeat units follow at residues Q1765–V1860, D1861–V1952, T1953–I2039, S2042–V2134, T2135–V2230, L2233–V2325, S2327–V2420, and G2424–V2516. The residue at position 1835 (S1835) is a Phosphoserine. A phosphoserine mark is found at S1967, S2053, S2128, S2152, S2158, S2163, S2180, S2284, S2327, and S2329. T2336 bears the Phosphothreonine mark. Phosphoserine is present on residues S2338, S2370, S2414, S2510, S2523, and S2526. Positions T2517–G2553 are hinge 2. The interval T2517–P2647 is self-association site, tail. One copy of the Filamin 24 repeat lies at P2552–V2646. Residue K2569 is modified to N6-acetyllysine; alternate. The residue at position 2569 (K2569) is an N6-succinyllysine; alternate. K2575 bears the N6-acetyllysine mark. Residue T2599 is modified to Phosphothreonine. 2 positions are modified to N6-acetyllysine: K2607 and K2621.

This sequence belongs to the filamin family. Homodimer. Interacts with FCGR1A, FLNB, FURIN, HSPB7, KCND2, INPPL1, MYOT, MYOZ1, PDLIM2, ARHGAP24, PSEN1, PSEN2 and ECSCR. Also interacts with various other binding partners in addition to filamentous actin. Interacts (via N-terminus) with TAF1B. Interacts (via N-terminus) with MIS18BP1 (via N-terminus). Interacts with TMEM67 (via C-terminus) and MKS1. Interacts (via actin-binding domain) with MICALL2 (via calponin-homology (CH) domain). Interacts with RFLNA and RFLNB. Interacts (via filamin repeat 5) with SYK; docks SYK to the plasma membrane. Interacts (via filamin repeats 19 and 21) with DRD3; increased PKA-mediated phosphorylation at Ser-2152. Interacts (via filamin repeat 21) with MAS1, AGTR1 and ADRA1D; increases PKA-mediated phosphorylation of FLNA at Ser-2152. Interacts (via filamin repeats 4, 9, 12, 17, 19, 21, and 23) with GP1BA (high affinity), ITGB7, ITGB2 and FBLIM1. Interacts with CEACAM1 (via cytoplasmic domain); inhibits cell migration and cell scattering by interfering with the interaction between FLNA and RALA. Interacts with FOXC1. Interacts (via calponin-homology (CH) domain 1 and filamin repeat 24) with CRMP1; the interaction alters FLNA ternary structure and thus promotes FLNA dissociation from F-actin. Interacts with DPYSL3/CRMP3 and DPYSL4/CRMP4. Post-translationally, phosphorylation at Ser-2152 is negatively regulated by the autoinhibited conformation of filamin repeats 19-21. Ligand binding induces a conformational switch triggering phosphorylation at Ser-2152 by PKA. In terms of processing, polyubiquitination in the CH1 domain by a SCF-like complex containing ASB2 leads to proteasomal degradation. Prior dissociation from actin may be required to expose the target lysines. Ubiquitinated in endothelial cells by RNF213 downstream of the non-canonical Wnt signaling pathway, leading to its degradation by the proteasome. In terms of tissue distribution, widely expressed. Highly expressed in Purkinje cells.

It is found in the cytoplasm. The protein resides in the cell cortex. The protein localises to the cytoskeleton. It localises to the perikaryon. Its subcellular location is the cell projection. It is found in the growth cone. The protein resides in the podosome. Actin binding protein that promotes orthogonal branching of actin filaments and links actin filaments to membrane glycoproteins. Anchors various transmembrane proteins to the actin cytoskeleton and serves as a scaffold for a wide range of cytoplasmic signaling proteins. Interaction with FLNB may allow neuroblast migration from the ventricular zone into the cortical plate. Tethers cell surface-localized furin, modulates its rate of internalization and directs its intracellular trafficking. Involved in ciliogenesis. Plays a role in cell-cell contacts and adherens junctions during the development of blood vessels, heart and brain organs. Plays a role in platelets morphology through interaction with SYK that regulates ITAM- and ITAM-like-containing receptor signaling, resulting in by platelet cytoskeleton organization maintenance. During the axon guidance process, required for growth cone collapse induced by SEMA3A-mediated stimulation of neurons. The polypeptide is Filamin-A (Flna) (Mus musculus (Mouse)).